The sequence spans 83 residues: Lipolysis-activating peptide 1-alpha chain (83 aa).

A signal peptide spans 1 to 21 (MNIILFYFMPILISLPGLLAS). Residues 22–83 (GTYPNDVYGL…LFWDVYKEHC (62 aa)) form the LCN-type CS-alpha/beta domain. 3 cysteine pairs are disulfide-bonded: C35–C58, C44–C63, and C48–C65.

This sequence belongs to the long (3 C-C) scorpion toxin superfamily. Monomer (edited version) and heterodimer (non-edited version) of this alpha chain and a beta chain (AC P0CI43). In terms of tissue distribution, expressed by the venom gland.

Its subcellular location is the secreted. In terms of biological role, the heterodimer non-edited LVP1 induces lipolysis in rat adipocytes. Induction of lipolysis by LVP1 appears to be mediated through the beta-2 adrenergic receptor pathway (ADRB2). The edited BmKBTx-like, similar to beta-toxins, may modulate voltage-gated sodium channels (Nav) and may block voltage-gated potassium channels (Kv). This Lychas mucronatus (Chinese swimming scorpion) protein is Lipolysis-activating peptide 1-alpha chain.